The sequence spans 113 residues: Sporulation membrane protein YtrH (113 aa).

The next 3 helical transmembrane spans lie at 16-36 (FIAL…AYLA), 51-71 (LKIW…YSFE), and 86-106 (LLLI…ISWL).

It localises to the forespore outer membrane. In terms of biological role, involved in sporulation. May contribute to cortex formation or stability. The sequence is that of Sporulation membrane protein YtrH (ytrH) from Bacillus subtilis (strain 168).